Reading from the N-terminus, the 173-residue chain is Glycine cleavage system H protein, mitochondrial (173 aa).

The N-terminal 48 residues, 1–48 (MALRAVRSVRAAVGGLRAISAPSAPCLPRPWGLRAGAVRELRTGPALL), are a transit peptide targeting the mitochondrion. The 83-residue stretch at 66-148 (VGTVGISNFA…YEDGWLIKMT (83 aa)) folds into the Lipoyl-binding domain. Lys107 is subject to N6-lipoyllysine.

This sequence belongs to the GcvH family. Interacts with GLDC. The glycine cleavage system is composed of four proteins: P (GLDC), T (GCST), L (DLD) and H (GCSH). The cofactor is (R)-lipoate.

The protein resides in the mitochondrion. In terms of biological role, the glycine cleavage system catalyzes the degradation of glycine. The H protein (GCSH) shuttles the methylamine group of glycine from the P protein (GLDC) to the T protein (GCST). Has a pivotal role in the lipoylation of enzymes involved in cellular energetics such as the mitochondrial dihydrolipoyllysine-residue acetyltransferase component of pyruvate dehydrogenase complex (DLAT), and the mitochondrial dihydrolipoyllysine-residue succinyltransferase component of 2-oxoglutarate dehydrogenase complex (DLST). In Bos taurus (Bovine), this protein is Glycine cleavage system H protein, mitochondrial.